Reading from the N-terminus, the 593-residue chain is MTSLSPPVVTTPTVPNPATKPLSPFSQNNSQVSLLTKPKRSFARKVSCKATNNDQNDQAQSKLDRRNVLLGLGGLYGVAGMGTDPFAFAKPIAPPDVSKCGPADLPQGAVPTNCCPPPSTKIIDFKLPAPAKLRIRPPAHAVDQAYRDKYYKAMELMKALPDDDPRSFKQQAAVHCAYCDGAYDQVGFPELELQIHNSWLFFPFHRYYLYFFEKILGKLINDPTFALPFWNWDSPAGMPLPAIYADPKSPLYDKLRSANHQPPTLVDLDYNGTEDNVSKETTINANLKIMYRQMVSNSKNAKLFFGNPYRAGDEPDPGGGSIEGTPHAPVHLWTGDNTQPNFEDMGNFYSAGRDPIFFAHHSNVDRMWSIWKTLGGKRTDLTDSDWLDSGFLFYNENAELVRVKVRDCLETKNLGYVYQDVDIPWLSSKPTPRRAKVALSKVAKKLGVAHAAVASSSKVVAGTEFPISLGSKISTVVKRPKQKKRSKKAKEDEEEILVIEGIEFDRDVAVKFDVYVNDVDDLPSGPDKTEFAGSFVSVPHSHKHKKKMNTILRLGLTDLLEEIEAEDDDSVVVTLVPKFGAVKIGGIKIEFAS.

A compositionally biased stretch (low complexity) spans 1–13 (MTSLSPPVVTTPT). Positions 1–34 (MTSLSPPVVTTPTVPNPATKPLSPFSQNNSQVSL) are disordered. The N-terminal 89 residues, 1 to 89 (MTSLSPPVVT…GMGTDPFAFA (89 aa)), are a transit peptide targeting the chloroplast. A compositionally biased stretch (polar residues) spans 24–34 (PFSQNNSQVSL). 2 disulfide bridges follow: Cys100/Cys115 and Cys114/Cys176. Cu cation contacts are provided by His175, His196, His205, His327, His331, and His361. The 2'-(S-cysteinyl)-histidine (Cys-His) cross-link spans 179 to 196 (CDGAYDQVGFPELELQIH).

The protein belongs to the tyrosinase family. It depends on Cu(2+) as a cofactor.

The protein localises to the plastid. The protein resides in the chloroplast thylakoid lumen. It carries out the reaction 2 catechol + O2 = 2 1,2-benzoquinone + 2 H2O. Catalyzes the oxidation of mono- and o-diphenols to o-diquinones. This Malus domestica (Apple) protein is Polyphenol oxidase, chloroplastic.